A 289-amino-acid polypeptide reads, in one-letter code: Bifunctional protein FolD (289 aa).

NADP(+) is bound by residues 166-168 (GRS), Ser-191, and Ile-232.

This sequence belongs to the tetrahydrofolate dehydrogenase/cyclohydrolase family. As to quaternary structure, homodimer.

The catalysed reaction is (6R)-5,10-methylene-5,6,7,8-tetrahydrofolate + NADP(+) = (6R)-5,10-methenyltetrahydrofolate + NADPH. It catalyses the reaction (6R)-5,10-methenyltetrahydrofolate + H2O = (6R)-10-formyltetrahydrofolate + H(+). It functions in the pathway one-carbon metabolism; tetrahydrofolate interconversion. Catalyzes the oxidation of 5,10-methylenetetrahydrofolate to 5,10-methenyltetrahydrofolate and then the hydrolysis of 5,10-methenyltetrahydrofolate to 10-formyltetrahydrofolate. The sequence is that of Bifunctional protein FolD from Synechococcus sp. (strain JA-3-3Ab) (Cyanobacteria bacterium Yellowstone A-Prime).